The chain runs to 708 residues: Leukotoxin translocation ATP-binding protein LktB (708 aa).

Positions 1–126 constitute a Peptidase C39 domain; that stretch reads MEANHQRNDL…ACYQGQLILV (126 aa). The ABC transmembrane type-1 domain occupies 155–437; that stretch reads FLETLIVSIF…LAQLWQDFQQ (283 aa). A run of 5 helical transmembrane segments spans residues 159–179, 192–212, 270–290, 296–316, and 389–409; these read LIVSIFLQIFALITPLFFQVV, LNIITVALAIVIIFEIVLSGL, ALTSVLDLLFSFIFFAVMWYY, LVILGSLPCYILWSIFISPIL, and VMVINLWLGAHLVISGDLSIG. The ABC transporter domain maps to 469–704; that stretch reads ISFKNIRFRY…SNGLYSYLHQ (236 aa). 503–510 contacts ATP; it reads GRSGSGKS.

It belongs to the ABC transporter superfamily. Protein-1 exporter (TC 3.A.1.109) family. In terms of assembly, homodimer.

The protein resides in the cell inner membrane. It catalyses the reaction ATP + H2O + proteinSide 1 = ADP + phosphate + proteinSide 2.. Part of the ABC transporter complex LktBD involved in leukotoxin export. Transmembrane domains (TMD) form a pore in the inner membrane and the ATP-binding domain (NBD) is responsible for energy generation. The sequence is that of Leukotoxin translocation ATP-binding protein LktB (lktB) from Mannheimia haemolytica (Pasteurella haemolytica).